Reading from the N-terminus, the 396-residue chain is Proteinase-activated receptor 4 (396 aa).

The first 16 residues, 1–16 (MCWPLLYPLVLGLSIS), serve as a signal peptide directing secretion. Residues 17 to 59 (LAEGIQTPSIYDDVESTRGSHEGPLGPTVELKEPKSSDKPNPR) constitute a propeptide, removed for receptor activation. The interval 28 to 62 (DDVESTRGSHEGPLGPTVELKEPKSSDKPNPRGYP) is disordered. Over residues 46 to 57 (ELKEPKSSDKPN) the composition is skewed to basic and acidic residues. Residues 60 to 94 (GYPGKFCANDSDTLELPASSQALLLGWVPTRLVPA) are Extracellular-facing. Residue asparagine 68 is glycosylated (N-linked (GlcNAc...) asparagine). A helical transmembrane segment spans residues 95-115 (LYGLVVAVGLPANGLALWVLA). Over 116-120 (TRVPR) the chain is Cytoplasmic. A helical membrane pass occupies residues 121–141 (LPSTILLMNLAVADLLLALVL). The Extracellular portion of the chain corresponds to 142-162 (PPRLAYHLRGQRWPFGEAACR). A disulfide bridge links cysteine 161 with cysteine 240. The helical transmembrane segment at 163-183 (VATAALYGHMYGSVLLLAAVS) threads the bilayer. Residues 184–203 (LDRYLALVHPLRARALRGQR) lie on the Cytoplasmic side of the membrane. Residues 204-224 (LTTGLCLVAWLSAATLALPLT) form a helical membrane-spanning segment. Residues 225–255 (LHRQTFRLAGSDRMLCHDALPLTEQTSHWRP) are Extracellular-facing. A helical membrane pass occupies residues 256 to 276 (AFICLAVLGCFVPLLAMGLCY). Residues 277 to 295 (GATLRALAANGQRYSHALR) are Cytoplasmic-facing. The helical transmembrane segment at 296 to 316 (LTALVLFSAVASFTPSNVLLV) threads the bilayer. The Extracellular segment spans residues 317-331 (LHYSNPSPEAWGNLY). The helical transmembrane segment at 332–355 (GAYVPSLALSTLNSCVDPFIYYYV) threads the bilayer. The Cytoplasmic portion of the chain corresponds to 356-396 (SHEFREKVRAMLCRQPEASSSSQASREAGSRGTAICSSTLL).

Belongs to the G-protein coupled receptor 1 family. Post-translationally, a proteolytic cleavage generates a new N-terminus that functions as a tethered ligand. In terms of tissue distribution, highly expressed in the spleen. Slight expression in the heart, lung, skeletal muscle and kidney. No detectable expression in brain, liver or testis. Also detected in platelets.

The protein resides in the cell membrane. In terms of biological role, receptor for activated thrombin or trypsin coupled to G proteins that stimulate phosphoinositide hydrolysis. May play a role in platelets activation. The chain is Proteinase-activated receptor 4 (F2rl3) from Mus musculus (Mouse).